The primary structure comprises 165 residues: Large ribosomal subunit protein bL17 (165 aa).

Residues 138–158 are compositionally biased toward basic and acidic residues; sequence QEKREAQEKAREEKRTARKSD. The tract at residues 138–165 is disordered; it reads QEKREAQEKAREEKRTARKSDSVPARKK.

The protein belongs to the bacterial ribosomal protein bL17 family. In terms of assembly, part of the 50S ribosomal subunit. Contacts protein L32.

The protein is Large ribosomal subunit protein bL17 of Leptospira borgpetersenii serovar Hardjo-bovis (strain JB197).